Reading from the N-terminus, the 175-residue chain is Shikimate kinase (175 aa).

Residue 10–15 (GAGKTT) coordinates ATP. T14 serves as a coordination point for Mg(2+). Residues D32, R56, and G78 each contribute to the substrate site. Residue R116 coordinates ATP. Residue R135 coordinates substrate.

The protein belongs to the shikimate kinase family. As to quaternary structure, monomer. Mg(2+) serves as cofactor.

It is found in the cytoplasm. The enzyme catalyses shikimate + ATP = 3-phosphoshikimate + ADP + H(+). It functions in the pathway metabolic intermediate biosynthesis; chorismate biosynthesis; chorismate from D-erythrose 4-phosphate and phosphoenolpyruvate: step 5/7. Functionally, catalyzes the specific phosphorylation of the 3-hydroxyl group of shikimic acid using ATP as a cosubstrate. In Aromatoleum aromaticum (strain DSM 19018 / LMG 30748 / EbN1) (Azoarcus sp. (strain EbN1)), this protein is Shikimate kinase.